Consider the following 169-residue polypeptide: MILGLALIPSKAFQDEVNAYRKRYDAHYATIMPHITIKGQFKINDGDLESVKETIKSKIEGIPTIDIHATKASNFAPITNVIYFKVEKTETLERLFNQFNNGDFYGVADHTFVPHFTIAQGLTSQEFEDIYGQLKLAGIDYKETIEQLSLVYYDEKEEKWKVLENYNLA.

The active-site Proton donor is the H34. Short sequence motifs (HXTX) lie at residues 34-37 (HITI) and 115-118 (HFTI). H115 (proton acceptor) is an active-site residue.

The protein belongs to the 2H phosphoesterase superfamily. YjcG family.

In Staphylococcus saprophyticus subsp. saprophyticus (strain ATCC 15305 / DSM 20229 / NCIMB 8711 / NCTC 7292 / S-41), this protein is Putative phosphoesterase SSP1770.